The following is a 209-amino-acid chain: Response regulator protein VraR (209 aa).

Residues 4–120 form the Response regulatory domain; the sequence is KVLFVDDHEM…DIADAVRKTY (117 aa). Asp-55 is modified (4-aspartylphosphate). Residues 141 to 206 form the HTH luxR-type domain; that stretch reads RAELYEMLTE…QAVIYAFQHN (66 aa). Residues 165–184 constitute a DNA-binding region (H-T-H motif); the sequence is NQEIASASHITIKTVKTHVS.

Post-translationally, phosphorylated by VraS.

It localises to the cytoplasm. Its function is as follows. Member of the two-component regulatory system VraS/VraR involved in the control of the cell wall peptidoglycan biosynthesis. The polypeptide is Response regulator protein VraR (vraR) (Staphylococcus epidermidis (strain ATCC 35984 / DSM 28319 / BCRC 17069 / CCUG 31568 / BM 3577 / RP62A)).